The following is a 312-amino-acid chain: Elongation factor Ts (312 aa).

The interval 84–87 is involved in Mg(2+) ion dislocation from EF-Tu; that stretch reads TDFL.

This sequence belongs to the EF-Ts family.

The protein localises to the cytoplasm. Associates with the EF-Tu.GDP complex and induces the exchange of GDP to GTP. It remains bound to the aminoacyl-tRNA.EF-Tu.GTP complex up to the GTP hydrolysis stage on the ribosome. In Caulobacter sp. (strain K31), this protein is Elongation factor Ts.